We begin with the raw amino-acid sequence, 308 residues long: Homoserine kinase (308 aa).

85–95 (PLTRGLGSSAA) provides a ligand contact to ATP.

It belongs to the GHMP kinase family. Homoserine kinase subfamily.

Its subcellular location is the cytoplasm. It catalyses the reaction L-homoserine + ATP = O-phospho-L-homoserine + ADP + H(+). Its pathway is amino-acid biosynthesis; L-threonine biosynthesis; L-threonine from L-aspartate: step 4/5. Its function is as follows. Catalyzes the ATP-dependent phosphorylation of L-homoserine to L-homoserine phosphate. This is Homoserine kinase from Caldicellulosiruptor saccharolyticus (strain ATCC 43494 / DSM 8903 / Tp8T 6331).